Here is a 320-residue protein sequence, read N- to C-terminus: Tyrosine recombinase XerC (320 aa).

Residues 14 to 104 (ADVREAVASW…SLRSFARHLE (91 aa)) enclose the Core-binding (CB) domain. A Tyr recombinase domain is found at 125–311 (RLPRPLPVAA…DSARLMSAFE (187 aa)). Catalysis depends on residues arginine 170, lysine 195, histidine 263, arginine 266, and histidine 289. The active-site O-(3'-phospho-DNA)-tyrosine intermediate is the tyrosine 298.

This sequence belongs to the 'phage' integrase family. XerC subfamily. As to quaternary structure, forms a cyclic heterotetrameric complex composed of two molecules of XerC and two molecules of XerD.

Its subcellular location is the cytoplasm. Its function is as follows. Site-specific tyrosine recombinase, which acts by catalyzing the cutting and rejoining of the recombining DNA molecules. The XerC-XerD complex is essential to convert dimers of the bacterial chromosome into monomers to permit their segregation at cell division. It also contributes to the segregational stability of plasmids. The polypeptide is Tyrosine recombinase XerC (Methylobacterium sp. (strain 4-46)).